The following is a 174-amino-acid chain: Crossover junction endodeoxyribonuclease RuvC (174 aa).

Residues Asp-8, Glu-69, and Asp-141 contribute to the active site. 3 residues coordinate Mg(2+): Asp-8, Glu-69, and Asp-141.

This sequence belongs to the RuvC family. Homodimer which binds Holliday junction (HJ) DNA. The HJ becomes 2-fold symmetrical on binding to RuvC with unstacked arms; it has a different conformation from HJ DNA in complex with RuvA. In the full resolvosome a probable DNA-RuvA(4)-RuvB(12)-RuvC(2) complex forms which resolves the HJ. Mg(2+) serves as cofactor.

The protein resides in the cytoplasm. It carries out the reaction Endonucleolytic cleavage at a junction such as a reciprocal single-stranded crossover between two homologous DNA duplexes (Holliday junction).. Its function is as follows. The RuvA-RuvB-RuvC complex processes Holliday junction (HJ) DNA during genetic recombination and DNA repair. Endonuclease that resolves HJ intermediates. Cleaves cruciform DNA by making single-stranded nicks across the HJ at symmetrical positions within the homologous arms, yielding a 5'-phosphate and a 3'-hydroxyl group; requires a central core of homology in the junction. The consensus cleavage sequence is 5'-(A/T)TT(C/G)-3'. Cleavage occurs on the 3'-side of the TT dinucleotide at the point of strand exchange. HJ branch migration catalyzed by RuvA-RuvB allows RuvC to scan DNA until it finds its consensus sequence, where it cleaves and resolves the cruciform DNA. This Xanthomonas oryzae pv. oryzae (strain MAFF 311018) protein is Crossover junction endodeoxyribonuclease RuvC.